The chain runs to 58 residues: Mastoparan-VT7 (58 aa).

The signal sequence occupies residues Met-1–Ala-27. 4 AXPX repeats span residues Ala-27 to Lys-30, Ala-31 to Leu-34, Ala-35 to Asn-38, and Ala-41 to Glu-44. The propeptide occupies Asp-28–Ala-45.

This sequence belongs to the MCD family. Mastoparan subfamily. As to expression, expressed by the venom gland.

The protein localises to the secreted. Its function is as follows. The synthetic peptide shows antimicrobial activities against Gram-negative bacteria (but not against all strains tested), Gram-positive bacteria (all strains tested) and the fungi C.albicans (but not C.parapsilosis). Exhibits little hemolytic activity against washed human erythrocytes. The sequence is that of Mastoparan-VT7 from Vespa tropica (Greater banded hornet).